Reading from the N-terminus, the 144-residue chain is Large ribosomal subunit protein uL15 (144 aa).

The segment at 1–53 (MRLNTLSPAEGSKHASKRLGRGIGSGLGKTGGRGHKGQKSRSGGGVRRGFEGG) is disordered. Over residues 21 to 31 (RGIGSGLGKTG) the composition is skewed to gly residues.

It belongs to the universal ribosomal protein uL15 family. In terms of assembly, part of the 50S ribosomal subunit.

Binds to the 23S rRNA. This Edwardsiella ictaluri (strain 93-146) protein is Large ribosomal subunit protein uL15.